Reading from the N-terminus, the 457-residue chain is Acetylcholine receptor subunit alpha (457 aa).

The N-terminal stretch at 1–20 is a signal peptide; it reads MEPRPLLLLLGLCSAGLVLG. The Extracellular portion of the chain corresponds to 21 to 230; sequence SEHETRLVAK…ITYHFVMQRL (210 aa). 2 cysteine pairs are disulfide-bonded: cysteine 148/cysteine 162 and cysteine 212/cysteine 213. Residue asparagine 161 is glycosylated (N-linked (GlcNAc...) asparagine). Helical transmembrane passes span 231–255, 263–281, and 297–316; these read PLYF…VFYL, MTLS…LVIV, and YMLF…VIVI. Over 317 to 428 the chain is Cytoplasmic; it reads NTHHRSPSTH…WKYVAMVMDH (112 aa). A helical transmembrane segment spans residues 429 to 447; the sequence is ILLAVFMLVCIIGTLAVFA.

The protein belongs to the ligand-gated ion channel (TC 1.A.9) family. Acetylcholine receptor (TC 1.A.9.1) subfamily. Alpha-1/CHRNA1 sub-subfamily. As to quaternary structure, one of the alpha chains that assemble within the acetylcholine receptor, a pentamer of two alpha chains, a beta, a delta, and a gamma (in immature muscle) or epsilon (in mature muscle) chains. The muscle heteropentamer composed of alpha-1, beta-1, delta, epsilon subunits interacts with the alpha-conotoxin ImII.

It is found in the postsynaptic cell membrane. Its subcellular location is the cell membrane. The enzyme catalyses K(+)(in) = K(+)(out). It carries out the reaction Na(+)(in) = Na(+)(out). Its function is as follows. Upon acetylcholine binding, the AChR responds by an extensive change in conformation that affects all subunits and leads to opening of an ion-conducting channel across the plasma membrane. The protein is Acetylcholine receptor subunit alpha (CHRNA1) of Bos taurus (Bovine).